The following is a 198-amino-acid chain: MTGYFLPPQTSSYTFRFAKVDDSAILSVGGNVAFECCAQEQPPITSTDFTINGIKPWQGSLPDNIGGTVYMYAGYYYPLKVVYSNAVSWGTLPISVELPDGTTVSDDFEGYVYSFDDDLSQSNCTIPDPSKHTTSIVTTTTELWTGTFTSTSTEMTTVTGTNGQPTDETVIVAKAPTTATSSSLSSSSSEQITSSITS.

The PA14 domain maps to 1–110 (MTGYFLPPQT…GTTVSDDFEG (110 aa)).

The protein belongs to the flocculin family.

This is an uncharacterized protein from Saccharomyces cerevisiae (strain ATCC 204508 / S288c) (Baker's yeast).